Here is a 119-residue protein sequence, read N- to C-terminus: Large ribosomal subunit protein uL18 (119 aa).

This sequence belongs to the universal ribosomal protein uL18 family. As to quaternary structure, part of the 50S ribosomal subunit; part of the 5S rRNA/L5/L18/L25 subcomplex. Contacts the 5S and 23S rRNAs.

Its function is as follows. This is one of the proteins that bind and probably mediate the attachment of the 5S RNA into the large ribosomal subunit, where it forms part of the central protuberance. This Helicobacter pylori (strain HPAG1) protein is Large ribosomal subunit protein uL18.